Here is a 1127-residue protein sequence, read N- to C-terminus: Inactive phospholipase C-like protein 2 (1127 aa).

A compositionally biased stretch (gly residues) spans methionine 1–glycine 11. A disordered region spans residues methionine 1–proline 128. Alanine 2 carries the post-translational modification N-acetylalanine. A Phosphoserine modification is found at serine 17. The span at glycine 19–glycine 31 shows a compositional bias: low complexity. Residues valine 32–leucine 42 are compositionally biased toward gly residues. Threonine 84 is subject to Phosphothreonine. A PH domain is found at asparagine 141 to serine 251. In terms of domain architecture, PI-PLC X-box spans glutamine 426–lysine 570. The residue at position 584 (threonine 584) is a Phosphothreonine. In terms of domain architecture, PI-PLC Y-box spans leucine 618–arginine 734. Positions arginine 734–serine 863 constitute a C2 domain. The tract at residues glycine 1101 to glutamate 1127 is disordered. Over residues aspartate 1106–glutamate 1127 the composition is skewed to basic and acidic residues. The residue at position 1113 (serine 1113) is a Phosphoserine.

It is found in the cytoplasm. May play an role in the regulation of Ins(1,4,5)P3 around the endoplasmic reticulum. This chain is Inactive phospholipase C-like protein 2 (PLCL2), found in Homo sapiens (Human).